The sequence spans 218 residues: Ras-related protein Rab-27B (218 aa).

An N-acetylthreonine modification is found at Thr2. Position 16-24 (16-24 (GDSGVGKTT)) interacts with GTP. Positions 38–46 (FITTVGIDF) match the Effector region motif. Residues 74–78 (DTAGQ), 133–136 (NKAD), and 163–165 (SAA) each bind GTP. Cys123 and Cys188 are oxidised to a cystine. The tract at residues 194–218 (IPDTVNGGNSGNLDGEKPPEKKCIC) is disordered. Residues 207–218 (DGEKPPEKKCIC) show a composition bias toward basic and acidic residues. 2 S-geranylgeranyl cysteine lipidation sites follow: Cys216 and Cys218. Cysteine methyl ester is present on Cys218.

Belongs to the small GTPase superfamily. Rab family. Interacts with SYTL2, SYTL4, MYRIP and MLPH. Interacts with RPH3A and RPH3A. Interacts (GDP-bound form preferentially) with DENND10. In terms of tissue distribution, expressed primarily in testis.

Its subcellular location is the membrane. The protein resides in the late endosome. The enzyme catalyses GTP + H2O = GDP + phosphate + H(+). Its activity is regulated as follows. Regulated by guanine nucleotide exchange factors (GEFs) which promote the exchange of bound GDP for free GTP, GTPase activating proteins (GAPs) which increase the GTP hydrolysis activity, and GDP dissociation inhibitors which inhibit the dissociation of the nucleotide from the GTPase. Activated by GEFs such as DENND10. Small GTPase which cycles between active GTP-bound and inactive GDP-bound states. In its active state, binds to a variety of effector proteins to regulate homeostasis of late endocytic pathway, including endosomal positioning, maturation and secretion. Plays a role in NTRK2/TRKB axonal anterograde transport by facilitating the association of NTRK2/TRKB with KLC1. May be involved in targeting uroplakins to urothelial apical membranes. The protein is Ras-related protein Rab-27B (RAB27B) of Homo sapiens (Human).